A 455-amino-acid polypeptide reads, in one-letter code: UDP-N-acetylmuramoylalanine--D-glutamate ligase (455 aa).

120–126 (GSNGKTT) is an ATP binding site.

It belongs to the MurCDEF family.

Its subcellular location is the cytoplasm. The catalysed reaction is UDP-N-acetyl-alpha-D-muramoyl-L-alanine + D-glutamate + ATP = UDP-N-acetyl-alpha-D-muramoyl-L-alanyl-D-glutamate + ADP + phosphate + H(+). It participates in cell wall biogenesis; peptidoglycan biosynthesis. In terms of biological role, cell wall formation. Catalyzes the addition of glutamate to the nucleotide precursor UDP-N-acetylmuramoyl-L-alanine (UMA). In Pediococcus pentosaceus (strain ATCC 25745 / CCUG 21536 / LMG 10740 / 183-1w), this protein is UDP-N-acetylmuramoylalanine--D-glutamate ligase.